Consider the following 102-residue polypeptide: Integration host factor subunit alpha (102 aa).

The interval 49–71 (FGNFQLRTKPQRPGRNPKTGEEI) is disordered.

The protein belongs to the bacterial histone-like protein family. In terms of assembly, heterodimer of an alpha and a beta chain.

Functionally, this protein is one of the two subunits of integration host factor, a specific DNA-binding protein that functions in genetic recombination as well as in transcriptional and translational control. This is Integration host factor subunit alpha from Nitrosomonas eutropha (strain DSM 101675 / C91 / Nm57).